The following is a 1321-amino-acid chain: Bile salt export pump (1321 aa).

Residues 1-62 (MSDSVILRSV…FSSSKDNWLM (62 aa)) lie on the Cytoplasmic side of the membrane. The ABC transmembrane type-1 1 domain maps to 62–385 (MFMGSVCALL…ASSCLEIFST (324 aa)). The helical transmembrane segment at 63-83 (FMGSVCALLHGMAQPGMIIVF) threads the bilayer. Topologically, residues 84 to 147 (GILTDIFVEY…VIKFSGIYAG (64 aa)) are extracellular. N-linked (GlcNAc...) asparagine glycans are attached at residues N109, N116, N122, and N125. Residues 148–168 (VGVAVLILGYFQIRLWVITGA) form a helical membrane-spanning segment. At 169 to 215 (RQIRKMRKFYFRRIMRMEIGWFDCTSVGELNSRFSDDINKIDEAIAD) the chain is on the cytoplasmic side. Residues 216–236 (QMALFLQRLSTALSGLLLGFY) traverse the membrane as a helical segment. The Extracellular segment spans residues 237-240 (RGWK). Residues 241–261 (LTLVILAVSPLIGIGAAVIGL) form a helical membrane-spanning segment. Residues 262–319 (SVAKFTELELKAYAKAGSIADEVLSSIRTVAAFGGENKEVERYEKNLMFAQRWGIWKG) lie on the Cytoplasmic side of the membrane. A helical transmembrane segment spans residues 320–340 (MVMGFFTGYMWCLIFFCYALA). Residues 341 to 353 (FWYGSRLVLDEGE) are Extracellular-facing. Residues 354-374 (YTPGTLIQIFLCVIIAAMNIG) form a helical membrane-spanning segment. Residues 375-755 (NASSCLEIFS…KYNISEWPYI (381 aa)) are Cytoplasmic-facing. The ABC transporter 1 domain occupies 420–656 (IEFHNVTFHY…KGVYFMLVTL (237 aa)). An ATP-binding site is contributed by 455-462 (GSSGAGKS). Phosphothreonine is present on T586. S587 carries the post-translational modification Phosphoserine. The interaction with HAX1 stretch occupies residues 651–674 (FMLVTLQSQEDNTHKETGIKGKDT). Over residues 662–684 (NTHKETGIKGKDTTEGDTPERTF) the composition is skewed to basic and acidic residues. A disordered region spans residues 662 to 722 (NTHKETGIKG…PLAIGDHKSS (61 aa)). A phosphoserine mark is found at S692, S703, and S706. The ABC transmembrane type-1 2 domain maps to 755–1043 (ILVGALCAAI…TFSYTPSYAK (289 aa)). The chain crosses the membrane as a helical span at residues 756–776 (LVGALCAAINGAVTPIYSLLF). Residues 777-794 (SQILKTFSLVDKEQQRSE) are Extracellular-facing. A helical membrane pass occupies residues 795–815 (IYSMCLFFVILGCVSLFTQFL). Residues 816 to 869 (QGYNFAKSGELLTKRLRKFGFKAMLRQDIGWFDDLKNNPGVLTTRLATDASQVQ) are Cytoplasmic-facing. Helical transmembrane passes span 870-890 (GATG…FVAV) and 891-911 (LIAF…FPFL). The Cytoplasmic portion of the chain corresponds to 912-979 (ALSGAVQTKM…SYKTAIRKAN (68 aa)). A helical transmembrane segment spans residues 980–1000 (VYGLCYAFSQGISFLANSAAY). At 1001-1011 (RYGGYLIVYED) the chain is on the extracellular side. Residues 1012-1032 (LNFSYVFRVVSSIAMSATAVG) form a helical membrane-spanning segment. Topologically, residues 1033 to 1321 (RTFSYTPSYA…KLVITGAPIS (289 aa)) are cytoplasmic. One can recognise an ABC transporter 2 domain in the interval 1078–1316 (IDFIDCKFTY…KGAYYKLVIT (239 aa)). 1113 to 1120 (GSSGCGKS) is a binding site for ATP. Residue S1321 is modified to Phosphoserine.

The protein belongs to the ABC transporter superfamily. ABCB family. Multidrug resistance exporter (TC 3.A.1.201) subfamily. As to quaternary structure, interacts with HAX1. Interacts with the adapter protein complex 2 (AP-2) throught AP2A2 or AP2A1; this interaction regulates cell membrane expression of ABCB11 through its internalization in a clathrin-dependent manner and its subsequent degradation. Post-translationally, N-glycosylated. Ubiquitinated; short-chain ubiquitination regulates cell-Surface expression of ABCB11. As to expression, expressed predominantly, if not exclusively in the liver, where it was further localized to the canalicular microvilli and to subcanalicular vesicles of the hepatocytes by in situ.

Its subcellular location is the apical cell membrane. The protein resides in the recycling endosome membrane. The protein localises to the endosome. It localises to the cell membrane. The catalysed reaction is cholate(in) + ATP + H2O = cholate(out) + ADP + phosphate + H(+). It carries out the reaction taurocholate(in) + ATP + H2O = taurocholate(out) + ADP + phosphate + H(+). The enzyme catalyses glycocholate(in) + ATP + H2O = glycocholate(out) + ADP + phosphate + H(+). It catalyses the reaction glycochenodeoxycholate(in) + ATP + H2O = glycochenodeoxycholate(out) + ADP + phosphate + H(+). The catalysed reaction is taurochenodeoxycholate(in) + ATP + H2O = taurochenodeoxycholate(out) + ADP + phosphate + H(+). It carries out the reaction glycoursodeoxycholate(in) + ATP + H2O = glycoursodeoxycholate(out) + ADP + phosphate + H(+). The enzyme catalyses tauroursodeoxycholate(in) + ATP + H2O = tauroursodeoxycholate(out) + ADP + phosphate + H(+). It catalyses the reaction taurodeoxycholate(in) + ATP + H2O = taurodeoxycholate(out) + ADP + phosphate + H(+). The catalysed reaction is taurolithocholate 3-sulfate(in) + ATP + H2O = taurolithocholate 3-sulfate(out) + ADP + phosphate + H(+). It carries out the reaction pravastatin(in) + ATP + H2O = pravastatin(out) + ADP + phosphate + H(+). Its activity is regulated as follows. The uptake of taurocholate is inhibited by taurolithocholate sulfate with an IC(50) of 9 uM. Pravastatin competitively inhibits the transport of taurocholic acid. Cyclosporin A, glibenclamide, rifampicin and troglitazonestrongly competitively inhibit the transport activity of taurocholate. The canalicular transport activity of taurocholate is strongly dependent on canalicular membrane cholesterol content. The uptake of taurocholate is increased by short- and medium-chain fatty acids. Cholesterol increases transport capacity of taurocholate without affecting the affinity for the substrate. Its function is as follows. Catalyzes the transport of the major hydrophobic bile salts, such as taurine and glycine-conjugated cholic acid across the canalicular membrane of hepatocytes in an ATP-dependent manner, therefore participates in hepatic bile acid homeostasis and consequently to lipid homeostasis through regulation of biliary lipid secretion in a bile salts dependent manner. Transports taurine-conjugated bile salts more rapidly than glycine-conjugated bile salts. Also transports non-bile acid compounds, such as pravastatin and fexofenadine in an ATP-dependent manner and may be involved in their biliary excretion. This chain is Bile salt export pump, found in Mus musculus (Mouse).